Here is a 277-residue protein sequence, read N- to C-terminus: Bifunctional protein FolD 1 (277 aa).

NADP(+) contacts are provided by residues 162-164 (GDS) and Ser187.

Belongs to the tetrahydrofolate dehydrogenase/cyclohydrolase family. As to quaternary structure, homodimer.

The enzyme catalyses (6R)-5,10-methylene-5,6,7,8-tetrahydrofolate + NADP(+) = (6R)-5,10-methenyltetrahydrofolate + NADPH. It carries out the reaction (6R)-5,10-methenyltetrahydrofolate + H2O = (6R)-10-formyltetrahydrofolate + H(+). The protein operates within one-carbon metabolism; tetrahydrofolate interconversion. Catalyzes the oxidation of 5,10-methylenetetrahydrofolate to 5,10-methenyltetrahydrofolate and then the hydrolysis of 5,10-methenyltetrahydrofolate to 10-formyltetrahydrofolate. This chain is Bifunctional protein FolD 1, found in Syntrophomonas wolfei subsp. wolfei (strain DSM 2245B / Goettingen).